We begin with the raw amino-acid sequence, 843 residues long: Complement component C7 (843 aa).

The N-terminal stretch at 1-22 is a signal peptide; that stretch reads MKVISLFILVGFIGEFQSFSSA. Positions 27–80 constitute a TSP type-1 1 domain; sequence NCQWDFYAPWSECNGCTKTQTRRRSVAVYGQYGGQPCVGNAFETQSCEPTRGCP. Disulfide bonds link C28–C63, C39–C73, C42–C79, C85–C96, C91–C109, C103–C119, and C128–C165. A glycan (C-linked (Man) tryptophan) is linked at W36. The 39-residue stretch at 83–121 folds into the LDL-receptor class A domain; it reads EGCGERFRCFSGQCISKSLVCNGDSDCDEDSADEDRCED. Positions 108–120 are enriched in acidic residues; it reads DCDEDSADEDRCE. Residues 108–143 form a disordered region; the sequence is DCDEDSADEDRCEDSERRPSCDIDKPPPNIELTGNG. Residues 121–132 show a composition bias toward basic and acidic residues; that stretch reads DSERRPSCDIDK. The 333-residue stretch at 124-456 folds into the MACPF domain; that stretch reads RRPSCDIDKP…EYLDEFDPCH (333 aa). An N-linked (GlcNAc...) asparagine glycan is attached at N202. Residues 219 to 240 are disordered; the sequence is SRKRSFFRSSSSSSRSYTSHTN. Over residues 225–234 the composition is skewed to low complexity; it reads FRSSSSSSRS. Intrachain disulfides connect C337-C353, C433-C560, C455-C505, C457-C473, C460-C475, C477-C486, C512-C545, C523-C535, C571-C613, C599-C626, C631-C673, and C659-C688. Positions 457-487 constitute an EGF-like domain; that stretch reads CRPCQNGGLATVEGTHCLCHCKPYTFGAACE. The TSP type-1 2 domain occupies 500-549; sequence DGGWSCWSSWSPCVQGKKTRSRECNNPPPSGGGRSCVGETTESTQCEDEE. 3 C-linked (Man) tryptophan; partial glycosylation sites follow: W503, W506, and W509. The interval 516-538 is disordered; the sequence is KKTRSRECNNPPPSGGGRSCVGE. 2 CCP regions span residues 545–615 and 616–693; these read CEDE…RCGE and DLRW…QKEN. Sushi domains lie at 569–628 and 629–690; these read EFCP…HCQK and IACV…RCVQ. Factor I module (FIM) regions lie at residues 695-770 and 771-843; these read LTQA…ASAE and KACG…AETQ. O-linked (GalNAc...) threonine glycosylation is present at T696. Disulfide bonds link C702/C713, C715/C750, C721/C743, C728/C763, C773/C782, C776/C789, C791/C825, C797/C818, and C805/C838. N754 carries an N-linked (GlcNAc...) (complex) asparagine glycan.

It belongs to the complement C6/C7/C8/C9 family. In terms of assembly, monomer or dimer; as a C5b-7 complex it can also form multimeric rosettes. Component of the membrane attack complex (MAC), composed of complement C5b, C6, C7, C8A, C8B, C8G and multiple copies of the pore-forming subunit C9. In terms of processing, C-, N- and O-glycosylated. O-glycosylated with core 1 or possibly core 8 glycans.

The protein resides in the secreted. The protein localises to the target cell membrane. With respect to regulation, membrane attack complex (MAC) assembly is inhibited by CD59, thereby protecting self-cells from damage during complement activation. MAC assembly is also inhibited by clusterin (CLU) chaperones that inhibit polymerization of C9. In terms of biological role, component of the membrane attack complex (MAC), a multiprotein complex activated by the complement cascade, which inserts into a target cell membrane and forms a pore, leading to target cell membrane rupture and cell lysis. The MAC is initiated by proteolytic cleavage of C5 into complement C5b in response to the classical, alternative, lectin and GZMK complement pathways. The complement pathways consist in a cascade of proteins that leads to phagocytosis and breakdown of pathogens and signaling that strengthens the adaptive immune system. C7 serves as a membrane anchor. During MAC assembly, associates with C5b and C6 to form the C5b-7 complex, a key lipophilic precursor of the MAC complex, which associates with the outer leaflet and reduces the energy for membrane bending. The protein is Complement component C7 of Homo sapiens (Human).